A 129-amino-acid chain; its full sequence is Small ribosomal subunit protein uS11 (129 aa).

Belongs to the universal ribosomal protein uS11 family. As to quaternary structure, part of the 30S ribosomal subunit. Interacts with proteins S7 and S18. Binds to IF-3.

Functionally, located on the platform of the 30S subunit, it bridges several disparate RNA helices of the 16S rRNA. Forms part of the Shine-Dalgarno cleft in the 70S ribosome. The polypeptide is Small ribosomal subunit protein uS11 (Thermosipho melanesiensis (strain DSM 12029 / CIP 104789 / BI429)).